The following is a 434-amino-acid chain: Sodium/bile acid cotransporter 5 (434 aa).

Residues 1–18 (MSGNFFIFLLLLVTPGEA) form the signal peptide. The Extracellular portion of the chain corresponds to 19–129 (KKSFLSFLNI…VRVFRQTDDS (111 aa)). 2 N-linked (GlcNAc...) asparagine glycosylation sites follow: Asn73 and Asn96. A helical membrane pass occupies residues 130–150 (LLQAPIHVDSSIFLLVLSMIL). The Cytoplasmic segment spans residues 151–172 (LNKCAFGCKIEFQVLQTVWKRP). Residues 173 to 193 (LPILLGVVIQFFLMPFCGFLL) form a helical membrane-spanning segment. The Extracellular segment spans residues 194 to 203 (SQILGLPKAQ). A helical transmembrane segment spans residues 204-226 (AFGFVMTCTCPGGGGGYLFALLL). The Cytoplasmic portion of the chain corresponds to 227–232 (EGDVTL). A helical membrane pass occupies residues 233 to 255 (AILMTCTSTSLALIMMPVNSYFY). Residues 256–268 (SRLLGLAGAFHVP) lie on the Extracellular side of the membrane. A helical transmembrane segment spans residues 269–289 (VLKIVSTLLFILMPMSTGVII). At 290–306 (KHKMPAKAICLERVVRP) the chain is on the cytoplasmic side. The helical transmembrane segment at 307-327 (LSLTLMFVGIYLAFRMGLVFL) threads the bilayer. Topologically, residues 328 to 331 (RMAN) are extracellular. A helical membrane pass occupies residues 332–352 (LEVFLLGLLVPALGLLFGYSL). Topologically, residues 353–365 (AKVYLLPLPVCKT) are cytoplasmic. The helical transmembrane segment at 366–386 (VALETGMLNSFLALAIIQLSF) threads the bilayer. Residues 387–395 (SQPKAHEAS) lie on the Extracellular side of the membrane. Residues 396–416 (VAPFTVAMCSSCEMLLLLLVY) form a helical membrane-spanning segment. Topologically, residues 417–434 (KAKRRPSLSTEYEKTPLV) are cytoplasmic.

It belongs to the bile acid:sodium symporter (BASS) (TC 2.A.28) family.

It is found in the membrane. The polypeptide is Sodium/bile acid cotransporter 5 (Slc10a5) (Mus musculus (Mouse)).